Reading from the N-terminus, the 638-residue chain is Pentatricopeptide repeat-containing protein At1g59720, chloroplastic/mitochondrial (638 aa).

The N-terminal 40 residues, 1–40, are a transit peptide targeting the chloroplast and mitochondrion; the sequence is MVVRSIIVSPPTTITYYHPMSIGLLVHPLSPHIPPASSPS. PPR repeat units lie at residues 82-112, 113-148, 150-184, 185-215, 216-246, 250-280, 288-318, 319-353, 356-390, and 392-422; these read TLFL…IENH, SSFM…GESS, DKHT…GFGG, DVYV…MPER, SLVS…MQRS, DGYT…LLRK, DVLV…MQKR, DLAS…RENV, NSVT…YCIE, and ALEH…MPMK. Positions 427 to 510 are type E motif; the sequence is IWRSLLDACC…EPGCSSIEIN (84 aa). The type E(+) motif stretch occupies residues 511–541; it reads GISHEFFAGDTSHPQTKQIYQQLKVIDDRLR. Residues 542-638 form a type DYW motif region; the sequence is SIGYLPDRSQ…DGSCSCLDYW (97 aa).

It belongs to the PPR family. PCMP-H subfamily. Interacts with ORRM1. Interacts with VAR3/OZ1.

It is found in the plastid. Its subcellular location is the chloroplast. The protein localises to the mitochondrion. Its function is as follows. Involved in multiple sites RNA editing events in chloroplasts. Involved in the editing of the site 2 of ndhB (ndhB-2) and site 3 of ndhD (ndhD-3) transcripts, which are two plastid-encoded subunits of the chloroplast NAD(P)H dehydrogenase (NDH) complex. Required for the activity of the NDH complex of the photosynthetic electron transport chain. This chain is Pentatricopeptide repeat-containing protein At1g59720, chloroplastic/mitochondrial (PCMP-H51), found in Arabidopsis thaliana (Mouse-ear cress).